Consider the following 277-residue polypeptide: Shikimate dehydrogenase (NADP(+)) (277 aa).

Shikimate-binding positions include 15-17 (SLS) and T62. The active-site Proton acceptor is the K66. N87 and D102 together coordinate shikimate. NADP(+) contacts are provided by residues 127–131 (GAGGA) and I219. Y221 lines the shikimate pocket. Residue G242 participates in NADP(+) binding.

The protein belongs to the shikimate dehydrogenase family. In terms of assembly, homodimer.

It catalyses the reaction shikimate + NADP(+) = 3-dehydroshikimate + NADPH + H(+). The protein operates within metabolic intermediate biosynthesis; chorismate biosynthesis; chorismate from D-erythrose 4-phosphate and phosphoenolpyruvate: step 4/7. Involved in the biosynthesis of the chorismate, which leads to the biosynthesis of aromatic amino acids. Catalyzes the reversible NADPH linked reduction of 3-dehydroshikimate (DHSA) to yield shikimate (SA). This is Shikimate dehydrogenase (NADP(+)) from Bacillus cytotoxicus (strain DSM 22905 / CIP 110041 / 391-98 / NVH 391-98).